The chain runs to 455 residues: Ribulose bisphosphate carboxylase large chain (455 aa).

Lys-5 carries the N6,N6,N6-trimethyllysine modification. Substrate-binding residues include Asn-114 and Thr-164. The active-site Proton acceptor is the Lys-166. Lys-168 provides a ligand contact to substrate. Residues Lys-192, Asp-194, and Glu-195 each coordinate Mg(2+). Lys-192 is modified (N6-carboxylysine). Catalysis depends on His-285, which acts as the Proton acceptor. Substrate contacts are provided by Arg-286, His-318, and Ser-370.

Belongs to the RuBisCO large chain family. Type I subfamily. In terms of assembly, heterohexadecamer of 8 large chains and 8 small chains; disulfide-linked. The disulfide link is formed within the large subunit homodimers. Mg(2+) is required as a cofactor. In terms of processing, the disulfide bond which can form in the large chain dimeric partners within the hexadecamer appears to be associated with oxidative stress and protein turnover.

It localises to the plastid. Its subcellular location is the chloroplast. The enzyme catalyses 2 (2R)-3-phosphoglycerate + 2 H(+) = D-ribulose 1,5-bisphosphate + CO2 + H2O. It catalyses the reaction D-ribulose 1,5-bisphosphate + O2 = 2-phosphoglycolate + (2R)-3-phosphoglycerate + 2 H(+). RuBisCO catalyzes two reactions: the carboxylation of D-ribulose 1,5-bisphosphate, the primary event in carbon dioxide fixation, as well as the oxidative fragmentation of the pentose substrate in the photorespiration process. Both reactions occur simultaneously and in competition at the same active site. This Lupinus arcticus (Arctic lupine) protein is Ribulose bisphosphate carboxylase large chain.